A 926-amino-acid chain; its full sequence is Sperm-associated antigen 1 (926 aa).

3 TPR repeats span residues alanine 209–valine 242, alanine 244–asparagine 275, and valine 276–asparagine 309. A disordered region spans residues glutamate 318–glycine 452. 2 positions are modified to phosphoserine: serine 347 and serine 354. Residues glycine 352–alanine 368 show a composition bias toward basic and acidic residues. Residues glutamate 369–proline 379 show a composition bias toward low complexity. At serine 423 the chain carries Phosphoserine. Positions alanine 428 to glycine 441 are enriched in gly residues. 6 TPR repeats span residues proline 445–alanine 478, serine 487–serine 520, lysine 522–leucine 554, phenylalanine 623–glutamate 656, cysteine 657–asparagine 690, and lysine 692–isoleucine 724. Composition is skewed to basic and acidic residues over residues isoleucine 758–glycine 769 and lysine 784–proline 799. The segment at isoleucine 758–alanine 801 is disordered. A GTP-binding site is contributed by alanine 781–serine 788. Position 791 is a phosphoserine (serine 791).

As to expression, present in most tissues, including lung, with the strongest expression in brain, colon, kidney, and testis. In sperm and testis, detected in particular in pachytene primary spermatocytes. Up-regulated in pancreatic tumor tissues and not in normal pancreatic tissue.

The protein resides in the cytoplasm. Its subcellular location is the dynein axonemal particle. Its function is as follows. May play a role in the cytoplasmic assembly of the ciliary dynein arms. May play a role in fertilization. Binds GTP and has GTPase activity. The sequence is that of Sperm-associated antigen 1 (SPAG1) from Homo sapiens (Human).